We begin with the raw amino-acid sequence, 86 residues long: Large ribosomal subunit protein bL27 (86 aa).

Positions 1–24 are disordered; the sequence is MAHKKAGGSTRNGRDSESKRLGVK.

The protein belongs to the bacterial ribosomal protein bL27 family.

This Alcanivorax borkumensis (strain ATCC 700651 / DSM 11573 / NCIMB 13689 / SK2) protein is Large ribosomal subunit protein bL27.